Consider the following 63-residue polypeptide: MRCLPVFVILLLLIPSAPCVDAHPKTKDDMPLASFHDNAKGTLQRFWKKRGCCPKQMRCCTLG.

Residues 1–19 (MRCLPVFVILLLLIPSAPC) form the signal peptide. Positions 20–50 (VDAHPKTKDDMPLASFHDNAKGTLQRFWKKR) are excised as a propeptide. 2 disulfide bridges follow: cysteine 52–cysteine 59 and cysteine 53–cysteine 60. Leucine 62 bears the Leucine amide mark.

In terms of tissue distribution, expressed by the venom duct.

Its subcellular location is the secreted. In vivo, low levels of the peptide injected into male specimens of the Siamese fighting fish causes an immediate aggressive display in this fish in response to their reflection when placed in a mirrored aquarium; High levels of the peptide suppressed this behavior. No effect is observed when injected into mice. In Conus purpurascens (Purple cone), this protein is Conotoxin p5a.